Here is a 474-residue protein sequence, read N- to C-terminus: tRNA-2-methylthio-N(6)-dimethylallyladenosine synthase (474 aa).

The MTTase N-terminal domain occupies 3–120 (QKLHIKTWGC…LPEMINQIRA (118 aa)). [4Fe-4S] cluster is bound by residues C12, C49, C83, C157, C161, and C164. The Radical SAM core domain maps to 143 to 375 (KAEGPTAFVS…QQRINNQAAQ (233 aa)). Residues 378 to 441 (RAMLGTEQRV…TNSLRGDVVR (64 aa)) enclose the TRAM domain.

It belongs to the methylthiotransferase family. MiaB subfamily. In terms of assembly, monomer. Requires [4Fe-4S] cluster as cofactor.

Its subcellular location is the cytoplasm. The catalysed reaction is N(6)-dimethylallyladenosine(37) in tRNA + (sulfur carrier)-SH + AH2 + 2 S-adenosyl-L-methionine = 2-methylsulfanyl-N(6)-dimethylallyladenosine(37) in tRNA + (sulfur carrier)-H + 5'-deoxyadenosine + L-methionine + A + S-adenosyl-L-homocysteine + 2 H(+). Catalyzes the methylthiolation of N6-(dimethylallyl)adenosine (i(6)A), leading to the formation of 2-methylthio-N6-(dimethylallyl)adenosine (ms(2)i(6)A) at position 37 in tRNAs that read codons beginning with uridine. This is tRNA-2-methylthio-N(6)-dimethylallyladenosine synthase from Mannheimia succiniciproducens (strain KCTC 0769BP / MBEL55E).